The chain runs to 396 residues: Dual specificity mitogen-activated protein kinase kinase dSOR1 (396 aa).

The interval 25-44 is disordered; it reads APTPPFKTPSGTDTHSLLGK. Residues 87–364 form the Protein kinase domain; that stretch reads LEKLGELGSG…LKTLLSHPWI (278 aa). ATP contacts are provided by residues 93-101 and K116; that span reads LGSGNGGVV. D209 serves as the catalytic Proton acceptor. A phosphoserine; by RAF mark is found at S237 and S241.

Belongs to the protein kinase superfamily. STE Ser/Thr protein kinase family. MAP kinase kinase subfamily. Interacts with Raf and ksr; Dsor1 binding to ksr probably promotes ksr and Raf dimerization and ksr-mediated Raf transactivation. In terms of processing, phosphorylation on Ser/Thr by MAP kinase kinase kinases regulates positively the kinase activity.

It carries out the reaction L-seryl-[protein] + ATP = O-phospho-L-seryl-[protein] + ADP + H(+). It catalyses the reaction L-threonyl-[protein] + ATP = O-phospho-L-threonyl-[protein] + ADP + H(+). The enzyme catalyses L-tyrosyl-[protein] + ATP = O-phospho-L-tyrosyl-[protein] + ADP + H(+). Required downstream of Raf in the sevenless (sev), torso (tor), and Drosophila EGF receptor homolog (DER) signal transduction pathways. Involved in both positive regulation (at the posterior terminus) and negative regulation (at the anterior domain) of tll, as in other terminal class gene products, maybe via the ERK-A kinase. The chain is Dual specificity mitogen-activated protein kinase kinase dSOR1 (Dsor1) from Drosophila melanogaster (Fruit fly).